A 2692-amino-acid chain; its full sequence is Thyroglobulin (2692 aa).

Positions 1–19 (MALALWVFALLGSACLVSA) are cleaved as a signal peptide. Tyrosine 24 is modified (iodotyrosine; alternate). Sulfotyrosine; alternate is present on tyrosine 24. Tyrosine 24 carries the post-translational modification Thyroxine; alternate. Triiodothyronine; alternate is present on tyrosine 24. Thyroglobulin type-1 domains lie at 31–92 (LRPC…PVAC), 93–160 (LSFC…PARC), and 161–248 (PGSC…LAGT). Intrachain disulfides connect cysteine 34/cysteine 52, cysteine 63/cysteine 70, cysteine 72/cysteine 92, cysteine 96/cysteine 120, cysteine 131/cysteine 138, cysteine 140/cysteine 160, cysteine 164/cysteine 183, and cysteine 194/cysteine 235. Tyrosine 108 is modified (iodotyrosine). A glycan (N-linked (GlcNAc...) asparagine) is linked at asparagine 110. Tyrosine 149 bears the Iodotyrosine; alternate mark. Residue tyrosine 149 is modified to Diiodotyrosine; alternate. Asparagine 198 carries N-linked (GlcNAc...) asparagine glycosylation. Iodotyrosine is present on residues tyrosine 234 and tyrosine 258. In terms of domain architecture, Thyroglobulin type-1 4 spans 298–358 (PTKCEVERFA…TRRPSEPLSC (61 aa)). Intrachain disulfides connect cysteine 301-cysteine 319, cysteine 330-cysteine 336, cysteine 338-cysteine 358, cysteine 364-cysteine 621, cysteine 408-cysteine 609, cysteine 632-cysteine 637, cysteine 639-cysteine 659, cysteine 663-cysteine 688, and cysteine 699-cysteine 704. Residues asparagine 485, asparagine 497, and asparagine 546 are each glycosylated (N-linked (GlcNAc...) asparagine). Thyroglobulin type-1 domains lie at 606-659 (SQGC…RPRC), 660-727 (PTAC…PKQC), and 728-923 (PTPC…VPAC). Tyrosine 705 carries the iodotyrosine; alternate modification. Tyrosine 705 is subject to Thyroxine; alternate. At tyrosine 705 the chain carries Triiodothyronine; alternate. At tyrosine 705 the chain carries Diiodotyrosine; alternate. 13 disulfide bridges follow: cysteine 706-cysteine 727, cysteine 731-cysteine 764, cysteine 775-cysteine 900, cysteine 902-cysteine 923, cysteine 927-cysteine 1033, cysteine 1044-cysteine 1051, cysteine 1053-cysteine 1079, cysteine 1128-cysteine 1147, cysteine 1151-cysteine 1171, cysteine 1183-cysteine 1190, cysteine 1192-cysteine 1212, cysteine 1237-cysteine 1287, and cysteine 1262-cysteine 1278. The N-linked (GlcNAc...) asparagine glycan is linked to asparagine 749. Tyrosine 786 bears the Iodotyrosine mark. The N-linked (GlcNAc...) asparagine glycan is linked to asparagine 855. Tyrosine 868 is modified (iodotyrosine; alternate). Residue tyrosine 868 is modified to Diiodotyrosine; alternate. Diiodotyrosine is present on tyrosine 885. A glycan (N-linked (GlcNAc...) asparagine) is linked at asparagine 949. Residue tyrosine 994 is modified to Iodotyrosine; alternate. Tyrosine 994 carries the diiodotyrosine; alternate modification. 3 consecutive Thyroglobulin type-1 domains span residues 1021–1079 (SGPL…PTPC), 1088–1147 (LSAW…SAPC), and 1148–1212 (PGLC…QPAC). A glycan (N-linked (GlcNAc...) asparagine) is linked at asparagine 1142. Tyrosine 1241 carries the iodotyrosine modification. Residue tyrosine 1241 is modified to Thyroxine. 2 N-linked (GlcNAc...) asparagine glycosylation sites follow: asparagine 1296 and asparagine 1384. 13 cysteine pairs are disulfide-bonded: cysteine 1372–cysteine 1392, cysteine 1395–cysteine 1406, cysteine 1409–cysteine 1423, cysteine 1426–cysteine 1443, cysteine 1447–cysteine 1456, cysteine 1476–cysteine 1498, cysteine 1535–cysteine 1559, cysteine 1539–cysteine 1545, cysteine 1571–cysteine 1594, cysteine 1656–cysteine 1681, cysteine 1660–cysteine 1666, cysteine 1665–cysteine 1766, and cysteine 1692–cysteine 1709. Type II repeat units follow at residues 1389–1402 (PLGC…SYFQ), 1403–1419 (EEQC…EQTG), and 1420–1436 (SLAC…TSVG). Tyrosine 1400 carries the iodotyrosine; alternate modification. Position 1400 is a diiodotyrosine; alternate (tyrosine 1400). The Thyroglobulin type-1 11 domain maps to 1444 to 1498 (VTACQRDEAGLQCDQDGQYRASQRDRASGKAFCVDSEGRRLPWSETQAPLVDAQC). One copy of the Type IIIA repeat lies at 1535–1655 (CLADCARDEA…GASLTEAHLF (121 aa)). A Type IIIB repeat occupies 1656 to 1823 (CLLACDRDSC…LFSLQQAHLW (168 aa)). Residue asparagine 1800 is glycosylated (N-linked (GlcNAc...) asparagine). 10 cysteine pairs are disulfide-bonded: cysteine 1824/cysteine 1850, cysteine 1828/cysteine 1835, cysteine 1859/cysteine 1870, cysteine 1927/cysteine 1955, cysteine 1931/cysteine 1937, cysteine 1936/cysteine 2007, cysteine 1966/cysteine 1979, cysteine 2061/cysteine 2085, cysteine 2065/cysteine 2071, and cysteine 2094/cysteine 2103. The stretch at 1824–1926 (CLSRCVQEPS…DKAISSGFFE (103 aa)) is one Type IIIA repeat. Residues 1927–2060 (CERLCDVDPC…VGDFSAARER (134 aa)) form a Type IIIB repeat. Asparagine 1944 is a glycosylation site (N-linked (GlcNAc...) asparagine). One copy of the Type IIIA repeat lies at 2061 to 2118 (CLLECSRHQACLVTTLQTRPGAVRCMFYADTQSCTHSLQAQNCQLLLREEATHIYRKP). Residue tyrosine 2115 is modified to Iodotyrosine. Residues 2119 to 2692 (DIPLPGLGSS…PELASKSYSK (574 aa)) are cholinesterase-like (ChEL). Asparagine 2181 and asparagine 2226 each carry an N-linked (GlcNAc...) asparagine glycan. Tyrosine 2467 carries the thyroxine modification. Iodotyrosine; alternate is present on tyrosine 2500. The residue at position 2500 (tyrosine 2500) is a Thyroxine; alternate. The residue at position 2500 (tyrosine 2500) is a Triiodothyronine; alternate. Diiodotyrosine; alternate is present on tyrosine 2500. Tyrosine 2514 and tyrosine 2544 each carry iodotyrosine. Cysteine 2518 and cysteine 2642 are oxidised to a cystine. Tyrosine 2624 bears the Diiodotyrosine mark. The segment covering 2658 to 2671 (EAEDGPLAESEEED) has biased composition (acidic residues). Residues 2658-2692 (EAEDGPLAESEEEDRPGLTEDLLGLPELASKSYSK) are disordered. Iodotyrosine; alternate is present on tyrosine 2690. Tyrosine 2690 carries the post-translational modification Thyroxine; alternate. At tyrosine 2690 the chain carries Triiodothyronine; alternate. Tyrosine 2690 is modified (diiodotyrosine; alternate).

Belongs to the type-B carboxylesterase/lipase family. Monomer. Homodimer (via ChEL region); occurs in the endoplasmic reticulum and is required for export to the Golgi apparatus. Homooligomer; disulfide-linked; stored in this form in the thyroid follicle lumen. In terms of processing, iodinated on tyrosine residues by TPO. There are 4 pairs of iodinated tyrosines used for coupling: acceptor Tyr-24 is coupled to donor Tyr-149 or Tyr-234, acceptor Tyr-2500 is coupled to donor Tyr-2467, acceptor Tyr-2690 in monomer 1 is coupled to donor Tyr-2690 in monomer 2 and acceptor Tyr-1241 in monomer 1 is coupled to donor Tyr-108 in monomer 2. Sulfated tyrosines are desulfated during iodination. Post-translationally, undergoes sequential proteolysis by cathepsins to release thyroxine (T4) and triiodothyronine (T3) hormones. In the thyroid follicle lumen, cross-linked TG (storage form) is solubilized by limited proteolysis mediated by cathepsins CTSB and/or CTSL. Partially cleaved TG is further processed by CTSK/cathepsin K and/or CTSL resulting in the release of T4. Following endocytosis, further processing occurs leading to the release of T3 and more T4 hormones. In terms of tissue distribution, expressed in thyroid epithelial cells.

It is found in the secreted. Functionally, acts as a substrate for the production of iodinated thyroid hormones thyroxine (T4) and triiodothyronine (T3). The synthesis of T3 and T4 involves iodination of selected tyrosine residues of TG/thyroglobulin followed by their oxidative coupling. Following TG re-internalization and lysosomal-mediated proteolysis, T3 and T4 are released from the polypeptide backbone leading to their secretion into the bloodstream. One dimer produces 7 thyroid hormone molecules. The chain is Thyroglobulin from Sus scrofa (Pig).